The following is a 356-amino-acid chain: 5-formaminoimidazole-4-carboxamide-1-(beta)-D-ribofuranosyl 5'-monophosphate synthetase (356 aa).

5-amino-1-(5-phospho-beta-D-ribosyl)imidazole-4-carboxamide contacts are provided by His-27 and Ser-94. Positions 101 to 333 (TENFADMAVP…YADLMEENLS (233 aa)) constitute an ATP-grasp domain. Residues 145 to 196 (PHDI…TRYY) and Glu-226 contribute to the ATP site. Asn-255 provides a ligand contact to 5-amino-1-(5-phospho-beta-D-ribosyl)imidazole-4-carboxamide. The Mg(2+) site is built by Glu-293 and Glu-306.

This sequence belongs to the phosphohexose mutase family. The cofactor is Mg(2+). Mn(2+) serves as cofactor.

The catalysed reaction is 5-amino-1-(5-phospho-beta-D-ribosyl)imidazole-4-carboxamide + formate + ATP = 5-formamido-1-(5-phospho-D-ribosyl)imidazole-4-carboxamide + ADP + phosphate. It functions in the pathway purine metabolism; IMP biosynthesis via de novo pathway; 5-formamido-1-(5-phospho-D-ribosyl)imidazole-4-carboxamide from 5-amino-1-(5-phospho-D-ribosyl)imidazole-4-carboxamide (formate route): step 1/1. Functionally, catalyzes the ATP- and formate-dependent formylation of 5-aminoimidazole-4-carboxamide-1-beta-d-ribofuranosyl 5'-monophosphate (AICAR) to 5-formaminoimidazole-4-carboxamide-1-beta-d-ribofuranosyl 5'-monophosphate (FAICAR) in the absence of folates. This Methanosarcina barkeri (strain Fusaro / DSM 804) protein is 5-formaminoimidazole-4-carboxamide-1-(beta)-D-ribofuranosyl 5'-monophosphate synthetase.